The primary structure comprises 282 residues: MLRIAVPNKGALAEAAREILQEAGYRQRRDSRELVLVDPENQVEFFYLRPRDIAVYVGKGTLDVGLTGRDLFRDAQVEGTAEEIMALGFGRSVFRLAAPVGTFSSESELTGRRIATSYDGLLHAYLERTGLDAEVVHLDGAVESSVKLGVADAIADVVETGSTLRAAGMEVFGESILDSEAVLICRAGERPEGLDVLLRRLKGVLVARRWVMIDYDIRRDLLEAATAVTPGLESPTVSPLRDETMVAVRSMVRKPDANRVMDELYALGARGILISAIHAIRL.

Belongs to the ATP phosphoribosyltransferase family. Long subfamily. Mg(2+) serves as cofactor.

The protein localises to the cytoplasm. It carries out the reaction 1-(5-phospho-beta-D-ribosyl)-ATP + diphosphate = 5-phospho-alpha-D-ribose 1-diphosphate + ATP. It functions in the pathway amino-acid biosynthesis; L-histidine biosynthesis; L-histidine from 5-phospho-alpha-D-ribose 1-diphosphate: step 1/9. With respect to regulation, feedback inhibited by histidine. Catalyzes the condensation of ATP and 5-phosphoribose 1-diphosphate to form N'-(5'-phosphoribosyl)-ATP (PR-ATP). Has a crucial role in the pathway because the rate of histidine biosynthesis seems to be controlled primarily by regulation of HisG enzymatic activity. This chain is ATP phosphoribosyltransferase, found in Micrococcus luteus (strain ATCC 4698 / DSM 20030 / JCM 1464 / CCM 169 / CCUG 5858 / IAM 1056 / NBRC 3333 / NCIMB 9278 / NCTC 2665 / VKM Ac-2230) (Micrococcus lysodeikticus).